Reading from the N-terminus, the 71-residue chain is Translation initiation factor IF-1 (71 aa).

In terms of domain architecture, S1-like spans 1–71 (MSKDDLIQFT…LTKGRVIHRH (71 aa)).

The protein belongs to the IF-1 family. As to quaternary structure, component of the 30S ribosomal translation pre-initiation complex which assembles on the 30S ribosome in the order IF-2 and IF-3, IF-1 and N-formylmethionyl-tRNA(fMet); mRNA recruitment can occur at any time during PIC assembly.

It is found in the cytoplasm. In terms of biological role, one of the essential components for the initiation of protein synthesis. Stabilizes the binding of IF-2 and IF-3 on the 30S subunit to which N-formylmethionyl-tRNA(fMet) subsequently binds. Helps modulate mRNA selection, yielding the 30S pre-initiation complex (PIC). Upon addition of the 50S ribosomal subunit IF-1, IF-2 and IF-3 are released leaving the mature 70S translation initiation complex. This Rickettsia canadensis (strain McKiel) protein is Translation initiation factor IF-1.